Consider the following 79-residue polypeptide: D-alanyl carrier protein (79 aa).

Positions 1 to 77 constitute a Carrier domain; that stretch reads MDIKSEVLKI…KIIEGITELR (77 aa). Position 35 is an O-(pantetheine 4'-phosphoryl)serine (serine 35).

It belongs to the DltC family. Post-translationally, 4'-phosphopantetheine is transferred from CoA to a specific serine of apo-DCP.

Its subcellular location is the cytoplasm. It functions in the pathway cell wall biogenesis; lipoteichoic acid biosynthesis. Its function is as follows. Carrier protein involved in the D-alanylation of lipoteichoic acid (LTA). The loading of thioester-linked D-alanine onto DltC is catalyzed by D-alanine--D-alanyl carrier protein ligase DltA. The DltC-carried D-alanyl group is further transferred to cell membrane phosphatidylglycerol (PG) by forming an ester bond, probably catalyzed by DltD. D-alanylation of LTA plays an important role in modulating the properties of the cell wall in Gram-positive bacteria, influencing the net charge of the cell wall. This chain is D-alanyl carrier protein, found in Streptococcus mutans serotype c (strain ATCC 700610 / UA159).